A 142-amino-acid chain; its full sequence is Putative thiosulfate sulfurtransferase, mitochondrial (142 aa).

A mitochondrion-targeting transit peptide spans 1–25 (MFSKTLSVSRLLMTRSFYSSTVVKN). In terms of domain architecture, Rhodanese spans 43 to 140 (GDKSTVLIDV…SWLEWSDKIK (98 aa)). Catalysis depends on Cys-104, which acts as the Cysteine persulfide intermediate.

The protein localises to the mitochondrion. It carries out the reaction thiosulfate + hydrogen cyanide = thiocyanate + sulfite + 2 H(+). In terms of biological role, thiosulfate sulfurtransferase which catalyzes the transfer of sulfane sulfur from thiosulfate to cyanide. This is Putative thiosulfate sulfurtransferase, mitochondrial from Schizosaccharomyces pombe (strain 972 / ATCC 24843) (Fission yeast).